A 204-amino-acid chain; its full sequence is Oxidoreductase iacF (204 aa).

Belongs to the oxidoreductase OpS7 family.

The protein operates within secondary metabolite biosynthesis. Its function is as follows. Oxidoreductase; part of the gene cluster that mediates the biosynthesis of iso-A82775C, a enylepoxycyclohexane and biosynthetic precursor of the chloropestolide anticancer natural products. Within the cluster, the prenyltransferase iacE prenylates siccayne to generate pestalodiol E, using dimethylallyl diphosphate (DMAPP) as cosubstrate. The probable oxidoreductase iacF is then involved in the epoxidation of pestalodiol F to pestalodiol F, which is further converted to pestalofone A by the short-chain dehydrogenase/reductase iacG. Iso-A82775C is subsequently generated from pestalofone A by the short-chain dehydrogenase/reductase iacC. Iso-A82775C is further condensed with maldoxin via a Diels-Alder reaction to produce the anticancer natural products chloropestolides A to E. In Pestalotiopsis fici (strain W106-1 / CGMCC3.15140), this protein is Oxidoreductase iacF.